The primary structure comprises 73 residues: Toxin Td10 (73 aa).

The N-terminal stretch at 1-7 is a signal peptide; sequence IGMVVEC. One can recognise an LCN-type CS-alpha/beta domain in the interval 8 to 70; sequence KDGYLMGPDG…VWERATNRCG (63 aa). Disulfide bonds link C18–C69, C22–C44, C30–C50, and C34–C52. The residue at position 71 (K71) is a Lysine amide.

It belongs to the long (4 C-C) scorpion toxin superfamily. Sodium channel inhibitor family. Beta subfamily. In terms of tissue distribution, expressed by the venom gland.

The protein localises to the secreted. Its function is as follows. Beta toxins bind voltage-independently at site-4 of sodium channels (Nav) and shift the voltage of activation toward more negative potentials thereby affecting sodium channel activation and promoting spontaneous and repetitive firing. The chain is Toxin Td10 from Tityus discrepans (Venezuelan scorpion).